The chain runs to 212 residues: Translation initiation factor IF-3 (212 aa).

Positions 171-212 (PKSASKKGHTPPKTQVEASKQANESAETEEEKKRCHPTKPVL) are disordered. Residues 182 to 195 (PKTQVEASKQANES) show a composition bias toward polar residues.

It belongs to the IF-3 family. In terms of assembly, monomer.

It localises to the cytoplasm. Functionally, IF-3 binds to the 30S ribosomal subunit and shifts the equilibrium between 70S ribosomes and their 50S and 30S subunits in favor of the free subunits, thus enhancing the availability of 30S subunits on which protein synthesis initiation begins. This is Translation initiation factor IF-3 from Porphyromonas gingivalis (strain ATCC 33277 / DSM 20709 / CIP 103683 / JCM 12257 / NCTC 11834 / 2561).